Consider the following 514-residue polypeptide: tRNA-2-methylthio-N(6)-dimethylallyladenosine synthase (514 aa).

The interval 1–21 is disordered; the sequence is MNEEQRKASSVDVLAERDKKA. The MTTase N-terminal domain maps to 68-186; it reads RTFLIKTYGC…LPEILEEAYL (119 aa). [4Fe-4S] cluster contacts are provided by Cys77, Cys113, Cys147, Cys223, Cys227, and Cys230. The region spanning 209-440 is the Radical SAM core domain; the sequence is REGNIKAWVN…KKVGHYSQIA (232 aa). Positions 442 to 505 constitute a TRAM domain; the sequence is SKYEGQTVTV…QYSLNGSFIK (64 aa).

The protein belongs to the methylthiotransferase family. MiaB subfamily. In terms of assembly, monomer. [4Fe-4S] cluster serves as cofactor.

The protein localises to the cytoplasm. It carries out the reaction N(6)-dimethylallyladenosine(37) in tRNA + (sulfur carrier)-SH + AH2 + 2 S-adenosyl-L-methionine = 2-methylsulfanyl-N(6)-dimethylallyladenosine(37) in tRNA + (sulfur carrier)-H + 5'-deoxyadenosine + L-methionine + A + S-adenosyl-L-homocysteine + 2 H(+). Catalyzes the methylthiolation of N6-(dimethylallyl)adenosine (i(6)A), leading to the formation of 2-methylthio-N6-(dimethylallyl)adenosine (ms(2)i(6)A) at position 37 in tRNAs that read codons beginning with uridine. The protein is tRNA-2-methylthio-N(6)-dimethylallyladenosine synthase of Staphylococcus aureus (strain USA300 / TCH1516).